Consider the following 422-residue polypeptide: 5-hydroxytryptamine receptor 1A (422 aa).

Residues 1–23 (MDVLSPGQGNNTTSPPAPFETGG) form a disordered region. The Extracellular portion of the chain corresponds to 1–38 (MDVLSPGQGNNTTSPPAPFETGGNTTGISDVTFSYQVI). N-linked (GlcNAc...) asparagine glycans are attached at residues asparagine 10, asparagine 11, and asparagine 24. The chain crosses the membrane as a helical span at residues 39–59 (TSLLLGTLIFCAVLGNACVVA). Topologically, residues 60–73 (AIALERSLQNVANY) are cytoplasmic. The helical transmembrane segment at 74–98 (LIGSLAVTDLMVSVLVLPMAALYQV) threads the bilayer. The Extracellular segment spans residues 99 to 107 (LNKWTLGQV). Residues 108–132 (TCDLFIALDVLCCTSSILHLCAIAL) form a helical membrane-spanning segment. Cysteines 109 and 187 form a disulfide. The serotonin site is built by aspartate 116 and cysteine 120. The short motif at 133–135 (DRY) is the DRY motif; important for ligand-induced conformation changes element. Residues 133–152 (DRYWAITDPIDYVNKRTPRR) lie on the Cytoplasmic side of the membrane. Residues 153–174 (AAALISLTWLIGFLISIPPMLG) traverse the membrane as a helical segment. Over 175–193 (WRTPEDRSDPDACTISKDH) the chain is Extracellular. The helical transmembrane segment at 194–216 (GYTIYSTFGAFYIPLLLMLVLYG) threads the bilayer. The Cytoplasmic portion of the chain corresponds to 217–346 (RIFRAARFRI…LARERKTVKT (130 aa)). Positions 235-263 (KTGADTHHGASPAPQPKKSVNGESGSRNW) are disordered. 4 residues coordinate 1D-myo-inositol 4-phosphate: threonine 314, lysine 345, threonine 346, and glycine 352. Residues 347–370 (LGIIMGTFILCWLPFFIVALVLPF) traverse the membrane as a helical segment. Residues 371–378 (CESSCHMP) lie on the Extracellular side of the membrane. Residues 379–403 (TLLGAIINWLGYSNSLLNPVIYAYF) traverse the membrane as a helical segment. The short motif at 396–400 (NPVIY) is the NPxxY motif; important for ligand-induced conformation changes and signaling element. 1D-myo-inositol 4-phosphate is bound by residues phenylalanine 403, asparagine 404, and lysine 405. Topologically, residues 404–422 (NKDFQNAFKKIIKCKFCRQ) are cytoplasmic.

The protein belongs to the G-protein coupled receptor 1 family. 5-hydroxytryptamine receptor subfamily. HTR1A sub-subfamily. Heterodimer; heterodimerizes with GPER1. Interacts with YIF1B. Interacts with GPR39 and GALR1.

The protein resides in the cell membrane. The protein localises to the cell projection. It is found in the dendrite. G-protein coupled receptor activity is regulated by lipids: phosphatidylinositol 4-phosphate increases HTR1A-mediated activity. Its function is as follows. G-protein coupled receptor for 5-hydroxytryptamine (serotonin). Also functions as a receptor for various drugs and psychoactive substances. Ligand binding causes a conformation change that triggers signaling via guanine nucleotide-binding proteins (G proteins) and modulates the activity of downstream effectors, such as adenylate cyclase. HTR1A is coupled to G(i)/G(o) G alpha proteins and mediates inhibitory neurotransmission: signaling inhibits adenylate cyclase activity and activates a phosphatidylinositol-calcium second messenger system that regulates the release of Ca(2+) ions from intracellular stores. Beta-arrestin family members regulate signaling by mediating both receptor desensitization and resensitization processes. This Pongo pygmaeus (Bornean orangutan) protein is 5-hydroxytryptamine receptor 1A (HTR1A).